A 706-amino-acid polypeptide reads, in one-letter code: SPX domain-containing membrane protein OsI_32082 (706 aa).

The SPX domain maps to 2–145 (VNFSNKLTKD…GYKFTDYYVR (144 aa)). The next 6 helical transmembrane spans lie at 251–271 (MSLVLNLANTFLYMVNTYIVV), 281–301 (LGAAATACGAVIGSMAVAQVF), 318–338 (LLFSSVVLLLGNVMYAMAFDL), 340–359 (SLTILLLGRVLCGMGSARAV), 378–398 (AAFVSASALGMACGPALAGLL), and 414–434 (LPGWIMAFGWLVYLIWLWISF). Positions 475–498 (SEQDEEDDNGDEEHNETLSSSTTT) are disordered. The segment covering 476–488 (EQDEEDDNGDEEH) has biased composition (acidic residues). 5 consecutive transmembrane segments (helical) span residues 520 to 540 (LLIYFMLKYAMEILLAESSVV), 554 to 574 (VFLAVLGLSVLPVNAIVGTYI), 583 to 603 (ILVASEMALLAGVMLSFKLTV), 611 to 631 (VCSAVLTFVSAEVVEGVNLSL), and 678 to 698 (LLNATLLPALLVCVASIAATL).

Belongs to the major facilitator superfamily.

It is found in the membrane. In Oryza sativa subsp. indica (Rice), this protein is SPX domain-containing membrane protein OsI_32082.